The primary structure comprises 178 residues: Adenine phosphoribosyltransferase (178 aa).

This sequence belongs to the purine/pyrimidine phosphoribosyltransferase family. As to quaternary structure, homodimer.

It is found in the cytoplasm. The catalysed reaction is AMP + diphosphate = 5-phospho-alpha-D-ribose 1-diphosphate + adenine. It participates in purine metabolism; AMP biosynthesis via salvage pathway; AMP from adenine: step 1/1. Functionally, catalyzes a salvage reaction resulting in the formation of AMP, that is energically less costly than de novo synthesis. The chain is Adenine phosphoribosyltransferase from Cereibacter sphaeroides (strain ATCC 17023 / DSM 158 / JCM 6121 / CCUG 31486 / LMG 2827 / NBRC 12203 / NCIMB 8253 / ATH 2.4.1.) (Rhodobacter sphaeroides).